The sequence spans 247 residues: Coiled-coil domain-containing protein 124 homolog (247 aa).

A disordered region spans residues 1 to 146; it reads MGGKKFGTNS…TTTTGSDDHE (146 aa). Positions 8-85 form a coiled coil; that stretch reads TNSKAEEARS…QEDKEIKERY (78 aa). Positions 11–114 are enriched in basic and acidic residues; the sequence is KAEEARSKKA…EQKQREKELA (104 aa). Positions 122-140 are enriched in low complexity; that stretch reads VVVVPTTTTTTTTTTTTTT.

Belongs to the CCDC124 family. As to quaternary structure, associates with translationally inactive ribosomes in the nonrotated state.

Ribosome-binding protein involved in ribosome hibernation: associates with translationally inactive ribosomes and stabilizes the nonrotated conformation of the 80S ribosome, thereby promoting ribosome preservation and storage. This Dictyostelium discoideum (Social amoeba) protein is Coiled-coil domain-containing protein 124 homolog.